The sequence spans 50 residues: Bacteriocin BacSp222 (50 aa).

M1 bears the N-formylmethionine mark.

It localises to the secreted. Functionally, has bacteriolytic activity against Gram-positive bacteria B.subtilis, L.lactis and M.luteus and several species from genus Staphylococcus including methicillin-resistant S.aureus, with MIC values ranging from 0.11 uM to 7.8 uM. Has no activity against Gram-negative bacteria or fungi. In vitro, has a dose-dependent cytolytic effect on eukaryotic cells. The sequence is that of Bacteriocin BacSp222 from Staphylococcus pseudintermedius.